A 397-amino-acid chain; its full sequence is Glutamyl-tRNA reductase (397 aa).

Substrate is bound by residues 47–50 (TCGR), S98, 103–105 (ETD), and Q109. Residue C48 is the Nucleophile of the active site. Position 177–182 (177–182 (GAGAVG)) interacts with NADP(+).

Belongs to the glutamyl-tRNA reductase family. Homodimer.

The catalysed reaction is (S)-4-amino-5-oxopentanoate + tRNA(Glu) + NADP(+) = L-glutamyl-tRNA(Glu) + NADPH + H(+). It participates in porphyrin-containing compound metabolism; protoporphyrin-IX biosynthesis; 5-aminolevulinate from L-glutamyl-tRNA(Glu): step 1/2. Its function is as follows. Catalyzes the NADPH-dependent reduction of glutamyl-tRNA(Glu) to glutamate 1-semialdehyde (GSA). This chain is Glutamyl-tRNA reductase, found in Pyrobaculum aerophilum (strain ATCC 51768 / DSM 7523 / JCM 9630 / CIP 104966 / NBRC 100827 / IM2).